The primary structure comprises 278 residues: Rhomboid protease GlpG (278 aa).

The next 6 helical transmembrane spans lie at Gly-95–Leu-115, Ala-143–Gly-163, Leu-170–Gln-190, Leu-192–Cys-212, Leu-224–Gly-241, and Ile-245–Phe-267. Ser-202 acts as the Nucleophile in catalysis. Residue His-255 is part of the active site.

It belongs to the peptidase S54 family.

The protein resides in the cell inner membrane. The enzyme catalyses Cleaves type-1 transmembrane domains using a catalytic dyad composed of serine and histidine that are contributed by different transmembrane domains.. Functionally, rhomboid-type serine protease that catalyzes intramembrane proteolysis. The polypeptide is Rhomboid protease GlpG (Serratia proteamaculans (strain 568)).